We begin with the raw amino-acid sequence, 255 residues long: Type III pantothenate kinase (255 aa).

6–13 provides a ligand contact to ATP; it reads DVGNTNTV. Residues Y100 and 107 to 110 each bind substrate; that span reads GADR. The Proton acceptor role is filled by D109. A K(+)-binding site is contributed by D129. ATP is bound at residue T132. T184 is a binding site for substrate.

Belongs to the type III pantothenate kinase family. As to quaternary structure, homodimer. NH4(+) is required as a cofactor. Requires K(+) as cofactor.

It localises to the cytoplasm. It carries out the reaction (R)-pantothenate + ATP = (R)-4'-phosphopantothenate + ADP + H(+). The protein operates within cofactor biosynthesis; coenzyme A biosynthesis; CoA from (R)-pantothenate: step 1/5. In terms of biological role, catalyzes the phosphorylation of pantothenate (Pan), the first step in CoA biosynthesis. This is Type III pantothenate kinase from Acetivibrio thermocellus (strain ATCC 27405 / DSM 1237 / JCM 9322 / NBRC 103400 / NCIMB 10682 / NRRL B-4536 / VPI 7372) (Clostridium thermocellum).